The sequence spans 155 residues: Small ribosomal subunit protein uS7c (155 aa).

The protein belongs to the universal ribosomal protein uS7 family. As to quaternary structure, part of the 30S ribosomal subunit.

Its subcellular location is the plastid. The protein localises to the chloroplast. One of the primary rRNA binding proteins, it binds directly to 16S rRNA where it nucleates assembly of the head domain of the 30S subunit. The chain is Small ribosomal subunit protein uS7c (rps7) from Hydrastis canadensis (Goldenseal).